The sequence spans 324 residues: Arginase (324 aa).

Mn(2+) contacts are provided by His115, Asp143, His145, and Asp147. Residues 145–149 (HADIN), 156–158 (SGN), and Asp202 each bind substrate. 2 residues coordinate Mn(2+): Asp249 and Asp251. Substrate-binding residues include Thr263 and Glu294.

It belongs to the arginase family. Homotrimer. It depends on Mn(2+) as a cofactor.

The enzyme catalyses L-arginine + H2O = urea + L-ornithine. Its pathway is nitrogen metabolism; urea cycle; L-ornithine and urea from L-arginine: step 1/1. This is Arginase (agaA) from Emericella nidulans (strain FGSC A4 / ATCC 38163 / CBS 112.46 / NRRL 194 / M139) (Aspergillus nidulans).